The primary structure comprises 472 residues: Siroheme synthase 1 (472 aa).

The segment at 1–203 (MDYLPLFADL…GQLTEAENEL (203 aa)) is precorrin-2 dehydrogenase /sirohydrochlorin ferrochelatase. Residues 22 to 23 (EV) and 43 to 44 (QT) each bind NAD(+). S128 is subject to Phosphoserine. The uroporphyrinogen-III C-methyltransferase stretch occupies residues 215–472 (GEVALVGAGP…AISPSVVNLA (258 aa)). S-adenosyl-L-methionine is bound at residue P224. D247 acts as the Proton acceptor in catalysis. The active-site Proton donor is K269. Residues 300 to 302 (GGD), I305, 330 to 331 (TA), M382, and G411 each bind S-adenosyl-L-methionine.

It in the N-terminal section; belongs to the precorrin-2 dehydrogenase / sirohydrochlorin ferrochelatase family. The protein in the C-terminal section; belongs to the precorrin methyltransferase family.

The catalysed reaction is uroporphyrinogen III + 2 S-adenosyl-L-methionine = precorrin-2 + 2 S-adenosyl-L-homocysteine + H(+). The enzyme catalyses precorrin-2 + NAD(+) = sirohydrochlorin + NADH + 2 H(+). It carries out the reaction siroheme + 2 H(+) = sirohydrochlorin + Fe(2+). It functions in the pathway cofactor biosynthesis; adenosylcobalamin biosynthesis; precorrin-2 from uroporphyrinogen III: step 1/1. The protein operates within cofactor biosynthesis; adenosylcobalamin biosynthesis; sirohydrochlorin from precorrin-2: step 1/1. It participates in porphyrin-containing compound metabolism; siroheme biosynthesis; precorrin-2 from uroporphyrinogen III: step 1/1. Its pathway is porphyrin-containing compound metabolism; siroheme biosynthesis; siroheme from sirohydrochlorin: step 1/1. It functions in the pathway porphyrin-containing compound metabolism; siroheme biosynthesis; sirohydrochlorin from precorrin-2: step 1/1. Multifunctional enzyme that catalyzes the SAM-dependent methylations of uroporphyrinogen III at position C-2 and C-7 to form precorrin-2 via precorrin-1. Then it catalyzes the NAD-dependent ring dehydrogenation of precorrin-2 to yield sirohydrochlorin. Finally, it catalyzes the ferrochelation of sirohydrochlorin to yield siroheme. This is Siroheme synthase 1 from Yersinia pestis bv. Antiqua (strain Nepal516).